Consider the following 243-residue polypeptide: MSMLCYTLIIAFLIGIWAAPKSEDNVPLGSPTTSDLSDTSCAQTHEGLKTSRNTDQRHLAPKKAEDQELGSAANIIVDPKLFQKRRFQSPRVLFSTQPPPLSRDEQSVEFLDNEDTLNRNIRTKRETHPVHNLGEHSVCDSISVWVTNKTKATDIKDNMVTVMVDINLNNEVYKQYFFETKCRNPNPVPSGCRGTDSRHWNSYCTTTQTFVKALTMEGNRASWRFIRIDTACVCVISRKTDNF.

The signal sequence occupies residues 1–18 (MSMLCYTLIIAFLIGIWA). A propeptide spanning residues 19-125 (APKSEDNVPL…TLNRNIRTKR (107 aa)) is cleaved from the precursor. A disordered region spans residues 45–66 (HEGLKTSRNTDQRHLAPKKAED). Residues 46–66 (EGLKTSRNTDQRHLAPKKAED) show a composition bias toward basic and acidic residues. 3 cysteine pairs are disulfide-bonded: Cys139–Cys204, Cys182–Cys232, and Cys192–Cys234. N-linked (GlcNAc...) asparagine glycosylation occurs at Asn148.

This sequence belongs to the NGF-beta family. Homodimer; non-covalently linked. As to expression, expressed by the venom gland.

The protein resides in the secreted. Its function is as follows. Nerve growth factor is important for the development and maintenance of the sympathetic and sensory nervous systems. It stimulates division and differentiation of sympathetic and embryonic sensory neurons as well as basal forebrain cholinergic neurons in the brain. Its relevance in the snake venom is not clear. However, it has been shown to inhibit metalloproteinase-dependent proteolysis of platelet glycoprotein Ib alpha, suggesting a metalloproteinase inhibition to prevent metalloprotease autodigestion and/or protection against prey proteases. Binds a lipid between the two protein chains in the homodimer. The lipid-bound form promotes histamine relase from mouse mast cells, contrary to the lipid-free form. The sequence is that of Venom nerve growth factor from Cryptophis nigrescens (Eastern small-eyed snake).